Here is a 205-residue protein sequence, read N- to C-terminus: Recombination protein RecR (205 aa).

The C4-type zinc-finger motif lies at 60–75; that stretch reads CKVCHNISDTETCQIC. A Toprim domain is found at 83–178; it reads STVCVVENIR…KLSVIARGIS (96 aa).

The protein belongs to the RecR family.

May play a role in DNA repair. It seems to be involved in an RecBC-independent recombinational process of DNA repair. It may act with RecF and RecO. The polypeptide is Recombination protein RecR (Bacteroides thetaiotaomicron (strain ATCC 29148 / DSM 2079 / JCM 5827 / CCUG 10774 / NCTC 10582 / VPI-5482 / E50)).